The following is a 624-amino-acid chain: tRNA uridine 5-carboxymethylaminomethyl modification enzyme MnmG (624 aa).

Residues G13–G18, V125, and S180 each bind FAD. G273 to F287 is a binding site for NAD(+). An FAD-binding site is contributed by Q370.

This sequence belongs to the MnmG family. As to quaternary structure, homodimer. Heterotetramer of two MnmE and two MnmG subunits. It depends on FAD as a cofactor.

It is found in the cytoplasm. NAD-binding protein involved in the addition of a carboxymethylaminomethyl (cmnm) group at the wobble position (U34) of certain tRNAs, forming tRNA-cmnm(5)s(2)U34. This is tRNA uridine 5-carboxymethylaminomethyl modification enzyme MnmG from Legionella pneumophila (strain Lens).